Consider the following 207-residue polypeptide: Large ribosomal subunit protein uL4 (207 aa).

The segment at 49-78 (HAVKNRSAVSGGGRKPWRQKGTGRARQGSI) is disordered.

The protein belongs to the universal ribosomal protein uL4 family. In terms of assembly, part of the 50S ribosomal subunit.

In terms of biological role, one of the primary rRNA binding proteins, this protein initially binds near the 5'-end of the 23S rRNA. It is important during the early stages of 50S assembly. It makes multiple contacts with different domains of the 23S rRNA in the assembled 50S subunit and ribosome. Its function is as follows. Forms part of the polypeptide exit tunnel. In Streptococcus equi subsp. zooepidemicus (strain H70), this protein is Large ribosomal subunit protein uL4.